The chain runs to 190 residues: Large ribosomal subunit protein bL17 (190 aa).

The tract at residues 128 to 190 is disordered; sequence KKTAGRKAAQ…VEENNEQNKA (63 aa). Low complexity predominate over residues 143 to 154; that stretch reads ALAPAEETPAPT. The segment covering 179-190 has biased composition (acidic residues); sequence LAVEENNEQNKA.

This sequence belongs to the bacterial ribosomal protein bL17 family. In terms of assembly, part of the 50S ribosomal subunit. Contacts protein L32.

This is Large ribosomal subunit protein bL17 from Salinispora tropica (strain ATCC BAA-916 / DSM 44818 / JCM 13857 / NBRC 105044 / CNB-440).